Consider the following 413-residue polypeptide: Methylaspartate ammonia-lyase (413 aa).

Residue glutamine 172 participates in (2S,3S)-3-methyl-L-aspartate binding. Residues aspartate 238, glutamate 273, and aspartate 307 each contribute to the Mg(2+) site. Residue glutamine 329 participates in (2S,3S)-3-methyl-L-aspartate binding. Catalysis depends on lysine 331, which acts as the Proton acceptor. 360 to 361 lines the (2S,3S)-3-methyl-L-aspartate pocket; it reads TC.

It belongs to the methylaspartate ammonia-lyase family. In terms of assembly, homodimer. Requires Mg(2+) as cofactor.

The catalysed reaction is (2S,3S)-3-methyl-L-aspartate = mesaconate + NH4(+). It functions in the pathway amino-acid degradation; L-glutamate degradation via mesaconate pathway; acetate and pyruvate from L-glutamate: step 2/4. Functionally, involved in the methylaspartate cycle. Catalyzes the formation of the alpha,beta-unsaturated bond by the reversible anti elimination of ammonia from L-threo-beta-methylaspartate (L-threo-(2S,3S)-3-methylaspartate) to give mesaconate. This is Methylaspartate ammonia-lyase from Citrobacter amalonaticus.